The sequence spans 239 residues: tRNA (guanine-N(7)-)-methyltransferase (239 aa).

The span at 1–13 (MEAEVQQGQQSPE) shows a compositional bias: polar residues. Positions 1–30 (MEAEVQQGQQSPEGQLEKRPPSPPWAGIPL) are disordered. S-adenosyl-L-methionine contacts are provided by Asp-72, Glu-97, Asn-124, and Asp-147. The active site involves Asp-147. Positions 151 and 183 each coordinate substrate.

This sequence belongs to the class I-like SAM-binding methyltransferase superfamily. TrmB family.

The catalysed reaction is guanosine(46) in tRNA + S-adenosyl-L-methionine = N(7)-methylguanosine(46) in tRNA + S-adenosyl-L-homocysteine. The protein operates within tRNA modification; N(7)-methylguanine-tRNA biosynthesis. Its function is as follows. Catalyzes the formation of N(7)-methylguanine at position 46 (m7G46) in tRNA. This is tRNA (guanine-N(7)-)-methyltransferase from Synechococcus sp. (strain JA-2-3B'a(2-13)) (Cyanobacteria bacterium Yellowstone B-Prime).